The primary structure comprises 311 residues: Malate dehydrogenase (311 aa).

Residues 7-13 and Asp-34 each bind NAD(+); that span reads GAAGGIG. Substrate is bound by residues Arg-81 and Arg-87. Residues Asn-94 and 117-119 contribute to the NAD(+) site; that span reads ITN. Asn-119 and Arg-153 together coordinate substrate. The active-site Proton acceptor is the His-177. Position 227 (Met-227) interacts with NAD(+).

It belongs to the LDH/MDH superfamily. MDH type 1 family. In terms of assembly, homodimer.

It carries out the reaction (S)-malate + NAD(+) = oxaloacetate + NADH + H(+). Its function is as follows. Catalyzes the reversible oxidation of malate to oxaloacetate. The protein is Malate dehydrogenase of Shewanella sp. (strain MR-4).